A 318-amino-acid polypeptide reads, in one-letter code: Probable plastid-lipid-associated protein 1, chloroplastic (318 aa).

A chloroplast-targeting transit peptide spans 1-55 (MATVPLFTQFPCKTLNPSSSNTKHQSKSPILLPINSINRRSEIGVSVHRPDFKIR). Threonine 57 carries the phosphothreonine modification.

This sequence belongs to the PAP/fibrillin family. Interacts (via N-terminus) with ABI2. As to expression, expressed in flower buds. Detected in tapetal cells, endothecium and connective in anthers and in subepidermal cells in filaments.

The protein resides in the plastid. It localises to the chloroplast. Its subcellular location is the plastoglobule. The protein localises to the chloroplast thylakoid. Its function is as follows. Probably involved in light/cold stress-related jasmonate (JA) biosynthesis. Contributes to the protection of photosystem II (PSII) against light stress. This is Probable plastid-lipid-associated protein 1, chloroplastic (PAP1) from Arabidopsis thaliana (Mouse-ear cress).